A 607-amino-acid chain; its full sequence is Elongation factor 4 (607 aa).

The tr-type G domain maps to 11–193; the sequence is ENIRNFSIIA…KIVDVVPAPD (183 aa). GTP is bound by residues 23–28 and 140–143; these read DHGKST and NKID.

The protein belongs to the TRAFAC class translation factor GTPase superfamily. Classic translation factor GTPase family. LepA subfamily.

The protein resides in the cell membrane. It carries out the reaction GTP + H2O = GDP + phosphate + H(+). In terms of biological role, required for accurate and efficient protein synthesis under certain stress conditions. May act as a fidelity factor of the translation reaction, by catalyzing a one-codon backward translocation of tRNAs on improperly translocated ribosomes. Back-translocation proceeds from a post-translocation (POST) complex to a pre-translocation (PRE) complex, thus giving elongation factor G a second chance to translocate the tRNAs correctly. Binds to ribosomes in a GTP-dependent manner. This chain is Elongation factor 4, found in Staphylococcus epidermidis (strain ATCC 35984 / DSM 28319 / BCRC 17069 / CCUG 31568 / BM 3577 / RP62A).